A 385-amino-acid chain; its full sequence is Odorant receptor 82a (385 aa).

The Cytoplasmic segment spans residues 1-32 (MGRLFQLQEYCLRAMGHKDDMDSTDSTALSLK). A helical membrane pass occupies residues 33-53 (HISSLIFVISAQYPLISYVAY). Over 54-62 (NRNDMEKVT) the chain is Extracellular. Residues 63 to 83 (ACLSVVFTNMLTVIKISTFLA) traverse the membrane as a helical segment. Topologically, residues 84 to 131 (NRKDFWEMIHRFRKMHEQSASHIPRYREGLDYVAEANKLASFLGRAYC) are cytoplasmic. The chain crosses the membrane as a helical span at residues 132–152 (VSCGLTGLYFMLGPIVKIGVC). Residues 153 to 186 (RWHGTTCDKELPMPMKFPFNDLESPGYEVCFLYT) are Extracellular-facing. Residues 187–207 (VLVTVVVVAYASAVDGLFISF) form a helical membrane-spanning segment. Over 208–257 (AINLRAHFQTLQRQIENWEFPSSEPDTQIRLKSIVEYHVLLLSLSRKLRS) the chain is Cytoplasmic. A helical membrane pass occupies residues 258–278 (IYTPTVMGQFVITSLQVGVII). Over 279-290 (YQLVTNMDSVMD) the chain is Extracellular. The chain crosses the membrane as a helical span at residues 291–311 (LLLYASFFGSIMLQLFIYCYG). The Cytoplasmic portion of the chain corresponds to 312-357 (GEIIKAESLQVDTAVRLSNWHLASPKTRTSLSLIILQSQKEVLIRA). A helical membrane pass occupies residues 358-378 (GFFVASLANFVGICRTALSLI). Residues 379-385 (TLIKSIE) lie on the Extracellular side of the membrane.

It belongs to the insect chemoreceptor superfamily. Heteromeric odorant receptor channel (TC 1.A.69) family. Or1a subfamily. As to quaternary structure, interacts with Orco. Complexes exist early in the endomembrane system in olfactory sensory neurons (OSNs), coupling these complexes to the conserved ciliary trafficking pathway. Expressed in olfactory sensory neurons in the antenna.

The protein localises to the cell membrane. In terms of biological role, odorant receptor which mediates acceptance or avoidance behavior, depending on its substrates. The odorant receptor repertoire encodes a large collection of odor stimuli that vary widely in identity, intensity, and duration. May form a complex with Orco to form odorant-sensing units, providing sensitive and prolonged odorant signaling and calcium permeability. The protein is Odorant receptor 82a (Or82a) of Drosophila melanogaster (Fruit fly).